We begin with the raw amino-acid sequence, 59 residues long: Aedesin (59 aa).

An N-terminal signal peptide occupies residues 1–23; that stretch reads MNFTKLFAIVLLAALVLLGQTEA.

Belongs to the cecropin family. As to expression, salivary gland (at protein level).

The protein localises to the secreted. In terms of biological role, antimicrobial peptide. Exhibits antibacterial activity against Gram-negative bacteria, such as Escherichia coli, Pseudomonas aeruginosa, Acinetobacter baumannii and Klebsiella pneumoniae. Shows no antibacterial effects against Gram-positive bacteria, such as Staphylococcus aureus, Enterococcus faecalis and Enterococcus faecium. Exhibits antiviral activity against all four dengue virus serotypes and chikungunya virus. Exhibits leishmanicidal activity. Partially neutralizes lipopolysaccharides (LPS). Exhibits anti-inflammatory properties: inhibits LPS-induced iNOS/NOS2 transcription, nitric oxide (NO) and pro-inflammatory cytokine production in mouse macrophages and human peripheral blood mononuclear cells (PBMCs); inhibits LPS-induced activation of MAPK and NF-kappa-B signaling pathways in mouse macrophages. The polypeptide is Aedesin (Aedes aegypti (Yellowfever mosquito)).